Reading from the N-terminus, the 312-residue chain is Putative HTH-type transcriptional regulatory protein Ta1363 (312 aa).

In terms of domain architecture, HTH cro/C1-type spans Leu133–His186. The H-T-H motif DNA-binding region spans Ile144–Asn163.

This Thermoplasma acidophilum (strain ATCC 25905 / DSM 1728 / JCM 9062 / NBRC 15155 / AMRC-C165) protein is Putative HTH-type transcriptional regulatory protein Ta1363.